Consider the following 39-residue polypeptide: Bacteriocin lactococcin-G subunit alpha (39 aa).

Bacteriocin activity requires interaction of alpha and beta peptides in a molar ratio of 7:1 or 8:1 respectively.

In terms of biological role, kills Lactococci. The polypeptide is Bacteriocin lactococcin-G subunit alpha (Lactococcus lactis subsp. lactis (Streptococcus lactis)).